A 317-amino-acid chain; its full sequence is Melanocyte-stimulating hormone receptor (317 aa).

Over 1 to 37 the chain is Extracellular; sequence MAVQGFQRRLLGSLNSTPTAIPQLGLAANQTGARCLE. Asn-29 carries N-linked (GlcNAc...) asparagine glycosylation. Residues 38–63 form a helical membrane-spanning segment; the sequence is VSIPDGLFLSLGLVSLVENVLVVATI. Over 64-72 the chain is Cytoplasmic; that stretch reads AKNRNLHSP. Residues 73–93 form a helical membrane-spanning segment; that stretch reads TYCFICCLALSDLLVSGGNVL. The Extracellular segment spans residues 94–118; sequence ETVVILLLEASALAARAAVVQPLDN. The helical transmembrane segment at 119 to 140 threads the bilayer; it reads VIDVITCSSMVSSLCFLGAIAV. Topologically, residues 141 to 163 are cytoplasmic; sequence DRYVSIFYALRYHSIVTLPRARQ. Residues 164 to 183 traverse the membrane as a helical segment; that stretch reads AIAAIWVASVLFSTLFIAYY. At 184 to 191 the chain is on the extracellular side; sequence DHAAVLLC. Residues 192–211 form a helical membrane-spanning segment; that stretch reads LVVFFLAMLVXMAVLYVHML. Residues 212–240 lie on the Cytoplasmic side of the membrane; that stretch reads ARACQHAQGIARLHKRQRPLHQGFGLKGA. The chain crosses the membrane as a helical span at residues 241 to 266; the sequence is VTLTILLGIFFLCWGPFFLHLTLIVL. Topologically, residues 267–279 are extracellular; it reads CPQHPTCSCIFKN. Residues 280-300 form a helical membrane-spanning segment; sequence FNLFLTLIICNAIIDPLIYAF. The Cytoplasmic segment spans residues 301 to 317; it reads RRQELRRTLKEGLTCSW. Cys-315 is lipidated: S-palmitoyl cysteine.

It belongs to the G-protein coupled receptor 1 family. As to quaternary structure, interacts with MGRN1, but does not undergo MGRN1-mediated ubiquitination; this interaction competes with GNAS-binding and thus inhibits agonist-induced cAMP production. Interacts with OPN3; the interaction results in a decrease in MC1R-mediated cAMP signaling and ultimately a decrease in melanin production in melanocytes.

The protein resides in the cell membrane. Receptor for MSH (alpha, beta and gamma) and ACTH. The activity of this receptor is mediated by G proteins which activate adenylate cyclase. Mediates melanogenesis, the production of eumelanin (black/brown) and phaeomelanin (red/yellow), via regulation of cAMP signaling in melanocytes. The polypeptide is Melanocyte-stimulating hormone receptor (MC1R) (Hylobates muelleri (Mueller's Bornean gibbon)).